We begin with the raw amino-acid sequence, 619 residues long: Mitochondrial Rho GTPase 1 (619 aa).

Residues 1–593 (MKKDVRILLV…TQADLKSSTF (593 aa)) are Cytoplasmic-facing. One can recognise a Miro 1 domain in the interval 2-168 (KKDVRILLVG…FYYAQKAVLH (167 aa)). GTP is bound by residues Arg-14, Gly-16, Lys-17, Thr-18, and Ser-19. Thr-18 contacts Mg(2+). Residues Pro-35 and Asp-57 each contribute to the Mg(2+) site. GTP-binding residues include Ser-59, Asn-118, Lys-119, Asp-121, Ala-149, and Lys-150. EF-hand domains follow at residues 184 to 219 (ACIK…CFNT) and 304 to 339 (HAYL…FPYM). 10 residues coordinate Ca(2+): Asp-197, Asp-199, Asp-201, Thr-203, Glu-208, Asp-317, Asp-319, Asp-321, Ala-323, and Glu-328. In terms of domain architecture, Miro 2 spans 417 to 580 (RNVFRCNVVG…FVKLTTMAMY (164 aa)). GTP-binding residues include Gly-429, Cys-430, Gly-431, Lys-432, Ser-433, Gly-434, Arg-448, Lys-529, Asp-531, Thr-559, and Cys-560. Gly-429 is a Mg(2+) binding site. A helical; Anchor for type IV membrane protein membrane pass occupies residues 594–616 (WLRASFGATVFAFLGFAMYKALI). The Mitochondrial intermembrane segment spans residues 617-619 (KQR).

Belongs to the mitochondrial Rho GTPase family. As to quaternary structure, homodimer.

It is found in the mitochondrion outer membrane. It catalyses the reaction GTP + H2O = GDP + phosphate + H(+). The catalysed reaction is ATP + H2O = ADP + phosphate + H(+). The enzyme catalyses UTP + H2O = UDP + phosphate + H(+). Functionally, atypical mitochondrial nucleoside-triphosphatase (NTPase) involved in mitochondrial trafficking. Probably involved in control of anterograde transport of mitochondria and their subcellular distribution. Can hydrolyze GTP, ATP and UTP. This is Mitochondrial Rho GTPase 1 (RHOT1) from Gallus gallus (Chicken).